Reading from the N-terminus, the 474-residue chain is Ribosomal RNA small subunit methyltransferase F (474 aa).

Residues 121 to 127, Glu145, Asp172, and Asp190 contribute to the S-adenosyl-L-methionine site; that span reads ASAPGSK. The Nucleophile role is filled by Cys243.

This sequence belongs to the class I-like SAM-binding methyltransferase superfamily. RsmB/NOP family.

The protein localises to the cytoplasm. It carries out the reaction cytidine(1407) in 16S rRNA + S-adenosyl-L-methionine = 5-methylcytidine(1407) in 16S rRNA + S-adenosyl-L-homocysteine + H(+). Specifically methylates the cytosine at position 1407 (m5C1407) of 16S rRNA. The polypeptide is Ribosomal RNA small subunit methyltransferase F (Shewanella piezotolerans (strain WP3 / JCM 13877)).